Reading from the N-terminus, the 282-residue chain is B3 domain-containing protein At5g06250 (282 aa).

Residues 46–159 (FEKSLTPSDV…RLFIGWRRRG (114 aa)) constitute a DNA-binding region (TF-B3).

It localises to the nucleus. This Arabidopsis thaliana (Mouse-ear cress) protein is B3 domain-containing protein At5g06250.